The primary structure comprises 312 residues: Small ribosomal subunit biogenesis GTPase RsgA (312 aa).

Positions 86–245 (QSFLKRPAVA…LADTPGFNRP (160 aa)) constitute a CP-type G domain. GTP is bound by residues 135-138 (TKID) and 187-195 (GPSGVGKTS). Residues C270, C275, H277, and C283 each coordinate Zn(2+).

Belongs to the TRAFAC class YlqF/YawG GTPase family. RsgA subfamily. As to quaternary structure, monomer. Associates with 30S ribosomal subunit, binds 16S rRNA. The cofactor is Zn(2+).

The protein localises to the cytoplasm. Its function is as follows. One of several proteins that assist in the late maturation steps of the functional core of the 30S ribosomal subunit. Helps release RbfA from mature subunits. May play a role in the assembly of ribosomal proteins into the subunit. Circularly permuted GTPase that catalyzes slow GTP hydrolysis, GTPase activity is stimulated by the 30S ribosomal subunit. The polypeptide is Small ribosomal subunit biogenesis GTPase RsgA (Prochlorococcus marinus (strain NATL1A)).